The chain runs to 177 residues: Large ribosomal subunit protein uL6 (177 aa).

This sequence belongs to the universal ribosomal protein uL6 family. In terms of assembly, part of the 50S ribosomal subunit.

In terms of biological role, this protein binds to the 23S rRNA, and is important in its secondary structure. It is located near the subunit interface in the base of the L7/L12 stalk, and near the tRNA binding site of the peptidyltransferase center. The polypeptide is Large ribosomal subunit protein uL6 (Shewanella amazonensis (strain ATCC BAA-1098 / SB2B)).